Consider the following 419-residue polypeptide: Serine hydroxymethyltransferase (419 aa).

(6S)-5,6,7,8-tetrahydrofolate contacts are provided by residues leucine 119 and 123–125; that span reads GHL. The residue at position 228 (lysine 228) is an N6-(pyridoxal phosphate)lysine.

It belongs to the SHMT family. In terms of assembly, homodimer. The cofactor is pyridoxal 5'-phosphate.

The protein localises to the cytoplasm. It catalyses the reaction (6R)-5,10-methylene-5,6,7,8-tetrahydrofolate + glycine + H2O = (6S)-5,6,7,8-tetrahydrofolate + L-serine. It participates in one-carbon metabolism; tetrahydrofolate interconversion. It functions in the pathway amino-acid biosynthesis; glycine biosynthesis; glycine from L-serine: step 1/1. In terms of biological role, catalyzes the reversible interconversion of serine and glycine with tetrahydrofolate (THF) serving as the one-carbon carrier. This reaction serves as the major source of one-carbon groups required for the biosynthesis of purines, thymidylate, methionine, and other important biomolecules. Also exhibits THF-independent aldolase activity toward beta-hydroxyamino acids, producing glycine and aldehydes, via a retro-aldol mechanism. The sequence is that of Serine hydroxymethyltransferase from Desulfosudis oleivorans (strain DSM 6200 / JCM 39069 / Hxd3) (Desulfococcus oleovorans).